The primary structure comprises 61 residues: Large ribosomal subunit protein bL32 (61 aa).

Basic residues predominate over residues 1–22; it reads MAVPKKKTSKSRRDMRRSHHAL. The interval 1 to 27 is disordered; sequence MAVPKKKTSKSRRDMRRSHHALKPSAY.

It belongs to the bacterial ribosomal protein bL32 family.

The polypeptide is Large ribosomal subunit protein bL32 (Rhodospirillum rubrum (strain ATCC 11170 / ATH 1.1.1 / DSM 467 / LMG 4362 / NCIMB 8255 / S1)).